Consider the following 4646-residue polypeptide: Cytoplasmic dynein 1 heavy chain 1 (4646 aa).

N-acetylserine is present on Ser-2. The tract at residues 53-1867 (EAALEEKSAL…SIQMANAKFN (1815 aa)) is stem. Ser-70 is subject to Phosphoserine. 3 coiled-coil regions span residues 181–202 (SVEK…NIEI), 455–478 (AHRK…QLRA), and 543–566 (TEAW…RITA). The tract at residues 448 to 703 (MVWRINPAHR…NTQEIFDDWA (256 aa)) is interaction with DYNC1I2. The interaction with DYNC1LI2 stretch occupies residues 651–802 (AKQIDRQLTA…EKVEERNTIS (152 aa)). N6-acetyllysine is present on Lys-1125. Coiled coils occupy residues 1171 to 1252 (TYVQ…AVES) and 1357 to 1373 (RKLR…LKSF). Phosphoserine is present on Ser-1230. AAA stretches follow at residues 1868 to 2099 (YGFE…VLVS), 2180 to 2452 (EELK…LTRL), 2556 to 2805 (EVET…WVRG), and 2899 to 3168 (VFYE…GGRT). Residues 1906–1913 (GPAGTGKT) and 2224–2231 (GPSGSGKS) contribute to the ATP site. The disordered stretch occupies residues 2390-2411 (GEDEAQRRRKGKEDEGEEAASP). ATP is bound by residues 2595–2602 (GPPGSGKT) and 2937–2944 (GVSGAGKT). Coiled-coil stretches lie at residues 3189-3275 (EKRS…ADKQ), 3396-3500 (AIAQ…KNQM), and 3737-3800 (EFQL…VSQQ). The stalk stretch occupies residues 3189–3500 (EKRSELEEQQ…KTSETFKNQM (312 aa)). The residue at position 3480 (Lys-3480) is an N6-acetyllysine. AAA regions lie at residues 3553–3782 (LSNA…EVTR) and 4005–4221 (AHMF…TVDT). Ser-4162 carries the phosphoserine modification. An N6-acetyllysine modification is found at Lys-4283. Thr-4366 is subject to Phosphothreonine. Ser-4368 carries the post-translational modification Phosphoserine.

This sequence belongs to the dynein heavy chain family. Homodimer. The cytoplasmic dynein 1 complex consists of two catalytic heavy chains (HCs) and a number of non-catalytic subunits presented by intermediate chains (ICs), light intermediate chains (LICs) and light chains (LCs); the composition seems to vary in respect to the IC, LIC and LC composition. The heavy chain homodimer serves as a scaffold for the probable homodimeric assembly of the respective non-catalytic subunits. The ICs and LICs bind directly to the HC dimer and dynein LCs assemble on the IC dimer. Interacts with DYNC1LI1; DYNC1LI1 and DYNC1LI2 bind mutually exclusive to DYNC1H1. Interacts with DYNC1LI2; DYNC1LI1 and DYNC1LI2 bind mutually exclusive to DYNC1H1. Interacts with DYNC1I2. Interacts with BICD2. Interacts with isoform 2 of CRACR2A. Interacts with DNALI1.

It is found in the cytoplasm. Its subcellular location is the cytoskeleton. Cytoplasmic dynein 1 acts as a motor for the intracellular retrograde motility of vesicles and organelles along microtubules. Dynein has ATPase activity; the force-producing power stroke is thought to occur on release of ADP. Plays a role in mitotic spindle assembly and metaphase plate congression. The protein is Cytoplasmic dynein 1 heavy chain 1 of Homo sapiens (Human).